Consider the following 192-residue polypeptide: Adenylate kinase (192 aa).

10 to 15 (GAGKGT) is a binding site for ATP. The segment at 30–59 (STGDMLREAIEKETEIGKQAKIFIESGALV) is NMP. Residues threonine 31, arginine 36, 57–59 (ALV), 85–88 (GYPR), and glutamine 92 each bind AMP. The LID stretch occupies residues 126-142 (KRVEEVVAVGGKIRSDD). Position 127 (arginine 127) interacts with ATP. Positions 139 and 150 each coordinate AMP. Alanine 178 is a binding site for ATP.

This sequence belongs to the adenylate kinase family. As to quaternary structure, monomer.

Its subcellular location is the cytoplasm. It carries out the reaction AMP + ATP = 2 ADP. Its pathway is purine metabolism; AMP biosynthesis via salvage pathway; AMP from ADP: step 1/1. Functionally, catalyzes the reversible transfer of the terminal phosphate group between ATP and AMP. Plays an important role in cellular energy homeostasis and in adenine nucleotide metabolism. This is Adenylate kinase from Bartonella bacilliformis (strain ATCC 35685 / KC583 / Herrer 020/F12,63).